We begin with the raw amino-acid sequence, 471 residues long: Methylenetetrahydrofolate--tRNA-(uracil-5-)-methyltransferase TrmFO (471 aa).

13 to 18 (GGGLAG) contributes to the FAD binding site.

The protein belongs to the MnmG family. TrmFO subfamily. Requires FAD as cofactor.

Its subcellular location is the cytoplasm. The catalysed reaction is uridine(54) in tRNA + (6R)-5,10-methylene-5,6,7,8-tetrahydrofolate + NADH + H(+) = 5-methyluridine(54) in tRNA + (6S)-5,6,7,8-tetrahydrofolate + NAD(+). It catalyses the reaction uridine(54) in tRNA + (6R)-5,10-methylene-5,6,7,8-tetrahydrofolate + NADPH + H(+) = 5-methyluridine(54) in tRNA + (6S)-5,6,7,8-tetrahydrofolate + NADP(+). Catalyzes the folate-dependent formation of 5-methyl-uridine at position 54 (M-5-U54) in all tRNAs. The protein is Methylenetetrahydrofolate--tRNA-(uracil-5-)-methyltransferase TrmFO of Azorhizobium caulinodans (strain ATCC 43989 / DSM 5975 / JCM 20966 / LMG 6465 / NBRC 14845 / NCIMB 13405 / ORS 571).